The following is a 201-amino-acid chain: Small ribosomal subunit protein uS4c (201 aa).

The interval 15 to 43 (LGALPGLTSKRPSPGSDLRNQSRSGKRSQ) is disordered. An S4 RNA-binding domain is found at 89-150 (MRLDNILFRL…EQRSRALIQK (62 aa)).

The protein belongs to the universal ribosomal protein uS4 family. Part of the 30S ribosomal subunit. Contacts protein S5. The interaction surface between S4 and S5 is involved in control of translational fidelity.

It localises to the plastid. It is found in the chloroplast. One of the primary rRNA binding proteins, it binds directly to 16S rRNA where it nucleates assembly of the body of the 30S subunit. Functionally, with S5 and S12 plays an important role in translational accuracy. The chain is Small ribosomal subunit protein uS4c (rps4) from Ceratophyllum demersum (Rigid hornwort).